Consider the following 626-residue polypeptide: ATP-dependent rRNA helicase spb4 (626 aa).

Residues 14-42 (WDALTPSLAEWVLDAISSMGFEKMTPVQA) carry the Q motif motif. One can recognise a Helicase ATP-binding domain in the interval 45-246 (IPLFMGNKDV…RVGLRNPVKI (202 aa)). 58-65 (AVTGSGKT) lines the ATP pocket. Positions 194–197 (DEAD) match the DEAD box motif. In terms of domain architecture, Helicase C-terminal spans 279–437 (ALLSLLSQLE…TTGEAAKILI (159 aa)). Positions 553 to 599 (QREAWSQKHEKQDLKELKREKKKRKREIERLEKMTDEEKKEEQAKEK) are disordered. Basic and acidic residues-rich tracts occupy residues 554 to 571 (REAW…ELKR) and 578 to 599 (REIE…AKEK). The stretch at 558–620 (SQKHEKQDLK…RKIEDDADVE (63 aa)) forms a coiled coil.

It belongs to the DEAD box helicase family. DDX55/SPB4 subfamily. As to quaternary structure, component of pre-60S ribosomal complexes.

The protein localises to the nucleus. It localises to the nucleolus. It carries out the reaction ATP + H2O = ADP + phosphate + H(+). Functionally, ATP-binding RNA helicase involved in the biogenesis of 60S ribosomal subunits. Binds 90S pre-ribosomal particles and dissociates from pre-60S ribosomal particles after processing of 27SB pre-rRNA. Required for the normal formation of 18S rRNA through the processing of pre-rRNAs at sites A0, A1 and A2, and the normal formation of 25S and 5.8S rRNAs through the processing of pre-rRNAs at sites C1 and C2. The chain is ATP-dependent rRNA helicase spb4 from Botryotinia fuckeliana (strain B05.10) (Noble rot fungus).